Consider the following 109-residue polypeptide: Death-associated protein-like 1 homolog (109 aa).

Disordered stretches follow at residues 1–51 (MVQL…KPRS) and 76–100 (FPET…ISRI). Basic and acidic residues predominate over residues 31–50 (KSADENANVEKETRKTDKPR).

The protein belongs to the DAP-DAPL1 family. As to quaternary structure, associates with ribosomes; preventing translation. Interacts with eiF5a (eif5a and eif5a2); preventing translation.

Ribosome-binding protein that promotes ribosome hibernation, a process during which ribosomes are stabilized in an inactive state and preserved from proteasomal degradation. Acts via its association with eiF5a (eif5a and eif5a2) at the polypeptide exit tunnel of the ribosome, preventing mRNA translation. Plays a key role in ribosome hibernation in the mature egg by preventing mRNA translation, leading to ribosome inactivation. Ribosomes, which are produced in large quantities during oogenesis, are stored and translationally repressed in the egg and early embryo. The protein is Death-associated protein-like 1 homolog of Danio rerio (Zebrafish).